Consider the following 219-residue polypeptide: Phosphatidylserine decarboxylase proenzyme (219 aa).

Residue S188 is the Schiff-base intermediate with substrate; via pyruvic acid of the active site. Pyruvic acid (Ser); by autocatalysis is present on S188.

Belongs to the phosphatidylserine decarboxylase family. PSD-A subfamily. Heterodimer of a large membrane-associated beta subunit and a small pyruvoyl-containing alpha subunit. Requires pyruvate as cofactor. In terms of processing, is synthesized initially as an inactive proenzyme. Formation of the active enzyme involves a self-maturation process in which the active site pyruvoyl group is generated from an internal serine residue via an autocatalytic post-translational modification. Two non-identical subunits are generated from the proenzyme in this reaction, and the pyruvate is formed at the N-terminus of the alpha chain, which is derived from the carboxyl end of the proenzyme. The post-translation cleavage follows an unusual pathway, termed non-hydrolytic serinolysis, in which the side chain hydroxyl group of the serine supplies its oxygen atom to form the C-terminus of the beta chain, while the remainder of the serine residue undergoes an oxidative deamination to produce ammonia and the pyruvoyl prosthetic group on the alpha chain.

It localises to the cell membrane. It catalyses the reaction a 1,2-diacyl-sn-glycero-3-phospho-L-serine + H(+) = a 1,2-diacyl-sn-glycero-3-phosphoethanolamine + CO2. It functions in the pathway phospholipid metabolism; phosphatidylethanolamine biosynthesis; phosphatidylethanolamine from CDP-diacylglycerol: step 2/2. Functionally, catalyzes the formation of phosphatidylethanolamine (PtdEtn) from phosphatidylserine (PtdSer). The sequence is that of Phosphatidylserine decarboxylase proenzyme from Trichlorobacter lovleyi (strain ATCC BAA-1151 / DSM 17278 / SZ) (Geobacter lovleyi).